The sequence spans 146 residues: Angiogenin (146 aa).

Positions 1–24 (MAMSLCPLLLVFVLGLGLTPPSLA) are cleaved as a signal peptide. At Gln25 the chain carries Pyrrolidone carboxylic acid. His37 serves as the catalytic Proton acceptor. TRNA is bound at residue Arg45. 3 cysteine pairs are disulfide-bonded: Cys50-Cys105, Cys63-Cys116, and Cys81-Cys131. Residues 55–59 (VRRHL) carry the Nucleolar localization signal motif. TRNA is bound by residues Cys105 and Ile127. The active-site Proton donor is the His138.

Belongs to the pancreatic ribonuclease family. As to quaternary structure, homodimer. Interacts with RNH1; inhibiting ANG ribonuclease activity. Interacts with PCNA.

It is found in the secreted. It localises to the nucleus. The protein resides in the nucleolus. Its subcellular location is the cytoplasm. The protein localises to the stress granule. Has weak tRNA ribonuclease activity by itself due to partial autoinhibition by its C-terminus, which folds into a short alpha-helix that partially occludes the substrate-binding site. In absence of stress, the ribonuclease activity is inhibited by RNH1 in the cytoplasm. In response to stress, dissociates from RNH1 in the cytoplasm and associates with cytoplasmic ribosomes with vacant A-sites: ribosomes directly activate the tRNA ribonuclease activity of ANG by refolding the C-terminal alpha-helix. In response to stress, the angiogenic activity of ANG is inhibited by RNH1 in the nucleus. Secreted ribonuclease that can either promote or restrict cell proliferation of target cells, depending on the context. Endocytosed in target cells via its receptor PLXNB2 and translocates to the cytoplasm or nucleus. Under stress conditions, localizes to the cytoplasm and promotes the assembly of stress granules (SGs): specifically cleaves a subset of tRNAs within anticodon loops to produce tRNA-derived stress-induced fragments (tiRNAs), resulting in translation repression and inhibition of cell proliferation. tiRNas also prevent formation of apoptosome, thereby promoting cell survival. Preferentially cleaves RNAs between a pyrimidine and an adenosine residue, suggesting that it cleaves the anticodon loop of tRNA(Ala) (32-UUAGCAU-38) after positions 33 and 36. Cleaves a subset of tRNAs, including tRNA(Ala), tRNA(Glu), tRNA(Gly), tRNA(Lys), tRNA(Val), tRNA(His), tRNA(Asp) and tRNA(Sec). Under growth conditions and in differentiated cells, translocates to the nucleus and stimulates ribosomal RNA (rRNA) transcription, including that containing the initiation site sequences of 45S rRNA, thereby promoting cell growth and proliferation. Angiogenin induces vascularization of normal and malignant tissues via its ability to promote rRNA transcription. Involved in hematopoietic stem and progenitor cell (HSPC) growth and survival by promoting rRNA transcription in growth conditions and inhibiting translation in response to stress, respectively. Mediates the crosstalk between myeloid and intestinal epithelial cells to protect the intestinal epithelial barrier integrity: secreted by myeloid cells and promotes intestinal epithelial cells proliferation and survival. Also mediates osteoclast-endothelial cell crosstalk in growing bone: produced by osteoclasts and protects the neighboring vascular cells against senescence by promoting rRNA transcription. In Equus caballus (Horse), this protein is Angiogenin (ANG).